Reading from the N-terminus, the 433-residue chain is Ligand-dependent corepressor (433 aa).

The tract at residues 1-51 is disordered; it reads MQRMIQQFAAEYTSKNSSTQDPSQPNSTKNQSLPKASPVTTSPTAATTQNP. The segment covering 13-34 has biased composition (polar residues); the sequence is TSKNSSTQDPSQPNSTKNQSLP. Residues 36 to 48 show a composition bias toward low complexity; the sequence is ASPVTTSPTAATT. Serine 42 is modified (phosphoserine). Positions 53 to 57 match the Interaction with nuclear receptors motif; sequence LSKLL. At serine 63 the chain carries Phosphoserine. The interval 64–147 is disordered; the sequence is PLDLTVRKSQ…GTREGFGHST (84 aa). Residues 93–110 show a composition bias toward polar residues; sequence AGSTSLSHSPGCSSTQGN. Serine 249 is modified (phosphoserine). Lysine 254 participates in a covalent cross-link: Glycyl lysine isopeptide (Lys-Gly) (interchain with G-Cter in SUMO2). The interval 299–348 is disordered; it reads QSRKSMLDAGPDSWGSDAEQSTSGQPYPTSDQEGDPGSKQPRKKRGRYRQ. Over residues 316 to 329 the composition is skewed to polar residues; that stretch reads AEQSTSGQPYPTSD. The short motif at 339-345 is the Nuclear localization signal element; it reads PRKKRGR. Residues 340 to 392 enclose the HTH psq-type domain; that stretch reads RKKRGRYRQYNSEILEEAISVVMSGKMSVSKAQSIYGIPHSTLEYKVKERLGT. A Glycyl lysine isopeptide (Lys-Gly) (interchain with G-Cter in SUMO2) cross-link involves residue arginine 345. The H-T-H motif DNA-binding region spans 368–388; the sequence is VSKAQSIYGIPHSTLEYKVKE. Glycine 391 participates in a covalent cross-link: Glycyl lysine isopeptide (Lys-Gly) (interchain with G-Cter in SUMO2). The tract at residues 393–412 is disordered; sequence LKNPPKKKMKLMRSEGPDVS. Lysine 414 is covalently cross-linked (Glycyl lysine isopeptide (Lys-Gly) (interchain with G-Cter in SUMO2)).

In terms of assembly, interacts with ESR1 and ESR2 in the presence of estradiol. Interacts with CTBP1, HDAC3 and HDAC6. Component of a large corepressor complex that contains about 20 proteins, including CTBP1, CTBP2, HDAC1 and HDAC2. As to expression, ubiquitous.

It is found in the nucleus. In terms of biological role, may act as transcription activator that binds DNA elements with the sequence 5'-CCCTATCGATCGATCTCTACCT-3'. Repressor of ligand-dependent transcription activation by target nuclear receptors. Repressor of ligand-dependent transcription activation by ESR1, ESR2, NR3C1, PGR, RARA, RARB, RARG, RXRA and VDR. The chain is Ligand-dependent corepressor from Homo sapiens (Human).